An 896-amino-acid polypeptide reads, in one-letter code: Probable DNA-directed RNA polymerase (896 aa).

Residues Asp546, Lys617, and Asp798 contribute to the active site.

Belongs to the phage and mitochondrial RNA polymerase family.

The protein localises to the mitochondrion. The catalysed reaction is RNA(n) + a ribonucleoside 5'-triphosphate = RNA(n+1) + diphosphate. DNA-dependent RNA polymerase catalyzes the transcription of DNA into RNA using the four ribonucleoside triphosphates as substrates. This chain is Probable DNA-directed RNA polymerase, found in Neurospora crassa.